A 267-amino-acid chain; its full sequence is Acryloyl-CoA reductase electron transfer subunit gamma (267 aa).

In terms of assembly, heterohexadecamer; tetramer of tetramers. Each tetramer is composed of 2 alpha (AcrC), a beta (AcrA) and a gamma (AcrB) subunit.

The protein resides in the cytoplasm. Functionally, part of the ETF-acryloyl-CoA reductase complex involved in the pathway of L-alanine fermentation. The electron transfer flavoprotein (ETF) serves as a specific electron acceptor for acryloyl-CoA reductase. In Anaerotignum propionicum (Clostridium propionicum), this protein is Acryloyl-CoA reductase electron transfer subunit gamma (acrB).